A 118-amino-acid chain; its full sequence is Putative pterin-4-alpha-carbinolamine dehydratase (118 aa).

Belongs to the pterin-4-alpha-carbinolamine dehydratase family.

It catalyses the reaction (4aS,6R)-4a-hydroxy-L-erythro-5,6,7,8-tetrahydrobiopterin = (6R)-L-erythro-6,7-dihydrobiopterin + H2O. The polypeptide is Putative pterin-4-alpha-carbinolamine dehydratase (Pseudomonas fluorescens (strain ATCC BAA-477 / NRRL B-23932 / Pf-5)).